Here is a 202-residue protein sequence, read N- to C-terminus: Transmembrane 4 L6 family member 1 (202 aa).

Over methionine 1–tyrosine 9 the chain is Cytoplasmic. A helical transmembrane segment spans residues isoleucine 10–phenylalanine 30. The Extracellular portion of the chain corresponds to proline 31 to tyrosine 49. The helical transmembrane segment at phenylalanine 50 to methionine 70 threads the bilayer. The Cytoplasmic segment spans residues aspartate 71–serine 93. Residues valine 94–glycine 114 form a helical membrane-spanning segment. At leucine 115–threonine 161 the chain is on the extracellular side. Asparagine 129 and asparagine 142 each carry an N-linked (GlcNAc...) asparagine glycan. The helical transmembrane segment at leucine 162–isoleucine 182 threads the bilayer. Residues asparagine 183–cysteine 202 are Cytoplasmic-facing.

The protein belongs to the L6 tetraspanin family. In terms of assembly, present in high molecular weight complexes in tumor cells. Interacts with SDCBP2. Highly expressed in skin and lung. Moderately expressed in lymph nodes and kidneys. Also present in thymic stroma and fibroblasts.

It is found in the membrane. This Mus musculus (Mouse) protein is Transmembrane 4 L6 family member 1 (Tm4sf1).